The chain runs to 373 residues: Chaperone protein DnaJ (373 aa).

The J domain maps to 5–69 (DYYEVLGVNK…NKRVNYDQFG (65 aa)). The CR-type zinc finger occupies 130 to 212 (GTKKEISIKK…CKGKGTENKT (83 aa)). Residues Cys143, Cys146, Cys160, Cys163, Cys186, Cys189, Cys200, and Cys203 each contribute to the Zn(2+) site. CXXCXGXG motif repeat units follow at residues 143 to 150 (CHTCNGDG), 160 to 167 (CSYCNGAG), 186 to 193 (CPKCEGSG), and 200 to 207 (CPTCKGKG).

Belongs to the DnaJ family. Homodimer. It depends on Zn(2+) as a cofactor.

Its subcellular location is the cytoplasm. Its function is as follows. Participates actively in the response to hyperosmotic and heat shock by preventing the aggregation of stress-denatured proteins and by disaggregating proteins, also in an autonomous, DnaK-independent fashion. Unfolded proteins bind initially to DnaJ; upon interaction with the DnaJ-bound protein, DnaK hydrolyzes its bound ATP, resulting in the formation of a stable complex. GrpE releases ADP from DnaK; ATP binding to DnaK triggers the release of the substrate protein, thus completing the reaction cycle. Several rounds of ATP-dependent interactions between DnaJ, DnaK and GrpE are required for fully efficient folding. Also involved, together with DnaK and GrpE, in the DNA replication of plasmids through activation of initiation proteins. The sequence is that of Chaperone protein DnaJ from Staphylococcus epidermidis (strain ATCC 35984 / DSM 28319 / BCRC 17069 / CCUG 31568 / BM 3577 / RP62A).